The sequence spans 30 residues: Photosystem I reaction center subunit XII (30 aa).

The helical transmembrane segment at 6-26 (VFTILAIALVPAVMAALLGSA) threads the bilayer.

Belongs to the PsaM family.

It localises to the cellular thylakoid membrane. This is Photosystem I reaction center subunit XII from Synechococcus sp. (strain JA-3-3Ab) (Cyanobacteria bacterium Yellowstone A-Prime).